The following is a 490-amino-acid chain: Cardiolipin synthase A (490 aa).

A run of 2 helical transmembrane segments spans residues 4–24 (YLFT…IIIV) and 39–59 (AAWL…WFLL). 2 consecutive PLD phosphodiesterase domains span residues 220 to 247 (MDLR…VDPY) and 403 to 430 (KKGL…DMRS). Catalysis depends on residues histidine 225, lysine 227, aspartate 232, histidine 408, lysine 410, and aspartate 415.

This sequence belongs to the phospholipase D family. Cardiolipin synthase subfamily. ClsA sub-subfamily.

Its subcellular location is the cell membrane. It catalyses the reaction 2 a 1,2-diacyl-sn-glycero-3-phospho-(1'-sn-glycerol) = a cardiolipin + glycerol. In terms of biological role, catalyzes the reversible phosphatidyl group transfer from one phosphatidylglycerol molecule to another to form cardiolipin (CL) (diphosphatidylglycerol) and glycerol. The protein is Cardiolipin synthase A of Buchnera aphidicola subsp. Baizongia pistaciae (strain Bp).